The sequence spans 219 residues: Protein-L-isoaspartate O-methyltransferase (219 aa).

Residue Ser-60 is part of the active site.

This sequence belongs to the methyltransferase superfamily. L-isoaspartyl/D-aspartyl protein methyltransferase family.

It is found in the cytoplasm. It carries out the reaction [protein]-L-isoaspartate + S-adenosyl-L-methionine = [protein]-L-isoaspartate alpha-methyl ester + S-adenosyl-L-homocysteine. Catalyzes the methyl esterification of L-isoaspartyl residues in peptides and proteins that result from spontaneous decomposition of normal L-aspartyl and L-asparaginyl residues. It plays a role in the repair and/or degradation of damaged proteins. The protein is Protein-L-isoaspartate O-methyltransferase of Rhodospirillum rubrum (strain ATCC 11170 / ATH 1.1.1 / DSM 467 / LMG 4362 / NCIMB 8255 / S1).